The sequence spans 394 residues: Exodeoxyribonuclease 7 large subunit (394 aa).

This sequence belongs to the XseA family. In terms of assembly, heterooligomer composed of large and small subunits.

The protein localises to the cytoplasm. The enzyme catalyses Exonucleolytic cleavage in either 5'- to 3'- or 3'- to 5'-direction to yield nucleoside 5'-phosphates.. In terms of biological role, bidirectionally degrades single-stranded DNA into large acid-insoluble oligonucleotides, which are then degraded further into small acid-soluble oligonucleotides. This chain is Exodeoxyribonuclease 7 large subunit, found in Thermotoga maritima (strain ATCC 43589 / DSM 3109 / JCM 10099 / NBRC 100826 / MSB8).